The following is a 54-amino-acid chain: Ovomucoid (54 aa).

The region spanning 4-54 (VDCSDYPKPACTVEYMPLCGSDNKTYDNKCNFCNAVVDSNGTLTLSHFGKC) is the Kazal-like domain. Disulfide bonds link Cys6–Cys36, Cys14–Cys33, and Cys22–Cys54. A glycan (N-linked (GlcNAc...) asparagine) is linked at Asn43.

It localises to the secreted. The chain is Ovomucoid from Anser anser anser (Western greylag goose).